Here is a 192-residue protein sequence, read N- to C-terminus: Phosphomevalonate kinase (192 aa).

Residues 17–23 and Arg-141 each bind ATP; that span reads KRKSGKD. Asn-170 is a binding site for substrate. 3 residues coordinate ATP: His-171, Arg-176, and Gln-180.

Monomer. As to expression, heart, liver, skeletal muscle, kidney, and pancreas. Lower level in brain, placenta and lung.

The protein localises to the cytoplasm. It is found in the cytosol. It carries out the reaction (R)-5-phosphomevalonate + ATP = (R)-5-diphosphomevalonate + ADP. It functions in the pathway isoprenoid biosynthesis; isopentenyl diphosphate biosynthesis via mevalonate pathway; isopentenyl diphosphate from (R)-mevalonate: step 2/3. Its function is as follows. Catalyzes the reversible ATP-dependent phosphorylation of mevalonate 5-phosphate to produce mevalonate diphosphate and ADP, a key step in the mevalonic acid mediated biosynthesis of isopentenyl diphosphate and other polyisoprenoid metabolites. The protein is Phosphomevalonate kinase (PMVK) of Homo sapiens (Human).